Reading from the N-terminus, the 298-residue chain is Ethanolamine ammonia-lyase small subunit (298 aa).

Adenosylcob(III)alamin contacts are provided by Val210, Glu231, and Cys261.

Belongs to the EutC family. The basic unit is a heterodimer which dimerizes to form tetramers. The heterotetramers trimerize; 6 large subunits form a core ring with 6 small subunits projecting outwards. Adenosylcob(III)alamin is required as a cofactor.

The protein localises to the bacterial microcompartment. The catalysed reaction is ethanolamine = acetaldehyde + NH4(+). Its pathway is amine and polyamine degradation; ethanolamine degradation. In terms of biological role, catalyzes the deamination of various vicinal amino-alcohols to oxo compounds. Allows this organism to utilize ethanolamine as the sole source of nitrogen and carbon in the presence of external vitamin B12. This Salmonella heidelberg (strain SL476) protein is Ethanolamine ammonia-lyase small subunit.